Reading from the N-terminus, the 314-residue chain is MAQKDTLLHLFAGGCGGTVGAIMTCPLEVLKTRLQSSGLTLRPVFQVQLGTLNGAGVIRPGSVTPGLLQVLRSILEKEGPRSLFRGLGPNLVGVAPSRAIYFAAYSKSKETFNGIFVPNSGVVHMSSAGFAAFITNSLMNPIWMVKTRMQLEKKARGEKKMNALQCARYVYKTEGMRGFYRGLTASYAGISETMICFLIYETLKKYLAQSRFTTPDTDNDKGASDFLGLMFAAAFAKGCASCIAYPHEVIRTRLREEGSKYKYFFQTARLVAVEEGYAAFYRGLIPQLIRQIPNTAIVLSTYELIVHLLAEPSK.

3 Solcar repeats span residues 4 to 111 (KDTL…SKET), 119 to 206 (NSGV…LKKY), and 224 to 308 (SDFL…IVHL). Helical transmembrane passes span 7–27 (LLHLFAGGCGGTVGAIMTCPL), 44–58 (VFQVQLGTLNGAGVI), 114–134 (GIFVPNSGVVHMSSAGFAAFI), 183–203 (LTASYAGISETMICFLIYETL), 226–246 (FLGLMFAAAFAKGCASCIAYP), and 291–311 (QIPNTAIVLSTYELIVHLLAE).

This sequence belongs to the mitochondrial carrier (TC 2.A.29) family.

The protein resides in the mitochondrion inner membrane. Mitochondrial transporter that imports/exports pyrimidine nucleotides into and from mitochondria which participates in dendritic cell endocytosis. This chain is Solute carrier family 25 member 33 (slc25a33), found in Danio rerio (Zebrafish).